The primary structure comprises 523 residues: Bifunctional purine biosynthesis protein PurH (523 aa).

An MGS-like domain is found at 4–152 (DHIRRPIRRA…KNHPSVAVVT (149 aa)).

It belongs to the PurH family.

The catalysed reaction is (6R)-10-formyltetrahydrofolate + 5-amino-1-(5-phospho-beta-D-ribosyl)imidazole-4-carboxamide = 5-formamido-1-(5-phospho-D-ribosyl)imidazole-4-carboxamide + (6S)-5,6,7,8-tetrahydrofolate. The enzyme catalyses IMP + H2O = 5-formamido-1-(5-phospho-D-ribosyl)imidazole-4-carboxamide. Its pathway is purine metabolism; IMP biosynthesis via de novo pathway; 5-formamido-1-(5-phospho-D-ribosyl)imidazole-4-carboxamide from 5-amino-1-(5-phospho-D-ribosyl)imidazole-4-carboxamide (10-formyl THF route): step 1/1. The protein operates within purine metabolism; IMP biosynthesis via de novo pathway; IMP from 5-formamido-1-(5-phospho-D-ribosyl)imidazole-4-carboxamide: step 1/1. The chain is Bifunctional purine biosynthesis protein PurH from Mycobacterium ulcerans (strain Agy99).